Consider the following 467-residue polypeptide: Cytochrome P450 85A3 (467 aa).

The helical transmembrane segment at 2-22 (AIFLIIFVVFFGFCILSTPLF) threads the bilayer. C417 is a heme binding site.

Belongs to the cytochrome P450 family. Heme serves as cofactor. As to expression, expressed in fruits.

Its subcellular location is the membrane. It carries out the reaction 6-deoxocastasterone + reduced [NADPH--hemoprotein reductase] + O2 = 6alpha-hydroxycastasterone + oxidized [NADPH--hemoprotein reductase] + H2O + H(+). The enzyme catalyses 6alpha-hydroxycastasterone + reduced [NADPH--hemoprotein reductase] + O2 = castasterone + oxidized [NADPH--hemoprotein reductase] + 2 H2O + H(+). The catalysed reaction is castasterone + reduced [NADPH--hemoprotein reductase] + O2 = brassinolide + oxidized [NADPH--hemoprotein reductase] + H2O + H(+). It catalyses the reaction 6-deoxocastasterone + 2 reduced [NADPH--hemoprotein reductase] + 2 O2 = castasterone + 2 oxidized [NADPH--hemoprotein reductase] + 3 H2O + 2 H(+). The protein operates within plant hormone biosynthesis; brassinosteroid biosynthesis. Its function is as follows. Catalyzes the C6-oxidation step in brassinosteroids biosynthesis. Converts 6-deoxocastasterone (6-deoxoCS) to castasterone (CS), and castasterone (CS) to brassinolide (BL). The sequence is that of Cytochrome P450 85A3 from Solanum lycopersicum (Tomato).